A 303-amino-acid polypeptide reads, in one-letter code: Probable aspartoacylase (303 aa).

His-13 and Glu-16 together coordinate Zn(2+). Substrate contacts are provided by residues Arg-55 and Asn-62–Arg-63. A Zn(2+)-binding site is contributed by His-104. 2 residues coordinate substrate: Glu-162 and Tyr-273.

It belongs to the AspA/AstE family. Aspartoacylase subfamily. Zn(2+) serves as cofactor.

It catalyses the reaction an N-acyl-L-aspartate + H2O = a carboxylate + L-aspartate. The protein is Probable aspartoacylase of Parasynechococcus marenigrum (strain WH8102).